A 349-amino-acid polypeptide reads, in one-letter code: Ferredoxin--NADP reductase 1 (349 aa).

Residues E36, K44, Y48, V88, L123, D290, and S331 each coordinate FAD.

It belongs to the ferredoxin--NADP reductase type 2 family. Homodimer. FAD is required as a cofactor.

The catalysed reaction is 2 reduced [2Fe-2S]-[ferredoxin] + NADP(+) + H(+) = 2 oxidized [2Fe-2S]-[ferredoxin] + NADPH. The chain is Ferredoxin--NADP reductase 1 from Bacillus licheniformis (strain ATCC 14580 / DSM 13 / JCM 2505 / CCUG 7422 / NBRC 12200 / NCIMB 9375 / NCTC 10341 / NRRL NRS-1264 / Gibson 46).